Reading from the N-terminus, the 82-residue chain is Omega-conotoxin-like Am6.2 (82 aa).

Residues 1–22 (MKLTCMMIVAVLFLTAWTFVTA) form the signal peptide. A propeptide spanning residues 23–52 (VPHSSNVLENLYLKARHEMENQEASKLNMR) is cleaved from the precursor. Intrachain disulfides connect C56/C73, C63/C77, and C72/C81. The residue at position 76 (W76) is a 6'-bromotryptophan; partial; in Am6.2b (major form).

This sequence belongs to the conotoxin O1 family. Post-translationally, mostly non-hydroxylated. In terms of processing, two forms of this peptides have been described. Am6.2a (Am3136) is not unmodified, while Am6.2b (Am3214) is Trp-76 brominated. Both forms are found in venom with a much more abundant brominated form. In terms of tissue distribution, expressed by the venom duct.

It localises to the secreted. Functionally, omega-conotoxins act at presynaptic membranes, they bind and block voltage-gated calcium channels (Cav). The protein is Omega-conotoxin-like Am6.2 of Conus amadis (Amadis cone).